The following is an 85-amino-acid chain: Toxin BmKaIT1 (85 aa).

An N-terminal signal peptide occupies residues 1–19 (MNYLVMISFAFLLMTGVES). An LCN-type CS-alpha/beta domain is found at 21–83 (RDAYIAQNYN…VPIRVPGKCH (63 aa)). 4 disulfide bridges follow: cysteine 31/cysteine 82, cysteine 35/cysteine 55, cysteine 41/cysteine 65, and cysteine 45/cysteine 67. Residues 84 to 85 (RR) constitute a propeptide, removed by a carboxypeptidase.

Belongs to the long (4 C-C) scorpion toxin superfamily. Sodium channel inhibitor family. Alpha subfamily. Expressed by the venom gland.

The protein resides in the secreted. In terms of biological role, alpha toxins bind voltage-independently at site-3 of sodium channels (Nav) and inhibit the inactivation of the activated channels, thereby blocking neuronal transmission. Shows a high toxicity toward insects and moderate toxicity against mammals. The chain is Toxin BmKaIT1 from Olivierus martensii (Manchurian scorpion).